Here is a 180-residue protein sequence, read N- to C-terminus: Putative methyltransferase YrhH (180 aa).

Belongs to the methyltransferase superfamily.

This is Putative methyltransferase YrhH (yrhH) from Bacillus subtilis (strain 168).